A 464-amino-acid polypeptide reads, in one-letter code: L-cystine uptake protein TcyP (464 aa).

A run of 10 helical transmembrane segments spans residues 3–23, 34–54, 73–93, 107–127, 184–204, 225–245, 263–283, 347–367, 371–391, and 395–415; these read TLLVGINVAVMLILVGVLYYM, VFTALGIGIIFGLILQFIYEP, YVKLLQMIVMPLILVSIISAF, GLIIGILILTTGIAAAVGIAA, PTSTISVVIFAAFIGIAFIGV, IVMRMVTLILRLTPYGVLALM, FVLASYVALIVMFVIHLLLIA, AGIYPAMLAMMVAPTVGIDPL, FILTLIAVVAISSFGVAGVGG, and FAALIVLSTMNLPIGIVALVI.

Belongs to the dicarboxylate/amino acid:cation symporter (DAACS) (TC 2.A.23) family.

The protein localises to the membrane. Its function is as follows. Mediates uptake of L-cystine, the oxidized form of L-cysteine. This is L-cystine uptake protein TcyP from Bacillus thuringiensis (strain Al Hakam).